The primary structure comprises 341 residues: UDP-3-O-acylglucosamine N-acyltransferase (341 aa).

The active-site Proton acceptor is the His-236.

This sequence belongs to the transferase hexapeptide repeat family. LpxD subfamily. Homotrimer.

The enzyme catalyses a UDP-3-O-[(3R)-3-hydroxyacyl]-alpha-D-glucosamine + a (3R)-hydroxyacyl-[ACP] = a UDP-2-N,3-O-bis[(3R)-3-hydroxyacyl]-alpha-D-glucosamine + holo-[ACP] + H(+). It functions in the pathway bacterial outer membrane biogenesis; LPS lipid A biosynthesis. Its function is as follows. Catalyzes the N-acylation of UDP-3-O-acylglucosamine using 3-hydroxyacyl-ACP as the acyl donor. Is involved in the biosynthesis of lipid A, a phosphorylated glycolipid that anchors the lipopolysaccharide to the outer membrane of the cell. This chain is UDP-3-O-acylglucosamine N-acyltransferase, found in Lawsonia intracellularis (strain PHE/MN1-00).